The following is a 178-amino-acid chain: Putative peroxiredoxin in rubredoxin operon (178 aa).

The 161-residue stretch at 3-163 (RLVGKPAPEF…TLRVLKAFQT (161 aa)) folds into the Thioredoxin domain. Catalysis depends on Cys-50, which acts as the Cysteine sulfenic acid (-SOH) intermediate.

It belongs to the peroxiredoxin family. AhpC/Prx1 subfamily. Homodimer; disulfide-linked, upon oxidation.

The protein localises to the cytoplasm. It catalyses the reaction a hydroperoxide + [protein]-dithiol = [protein]-disulfide + an alcohol + H2O. Functionally, thiol-specific peroxidase that catalyzes the reduction of hydrogen peroxide and organic hydroperoxides to water and alcohols, respectively. Plays a role in cell protection against oxidative stress by detoxifying peroxides. This is Putative peroxiredoxin in rubredoxin operon from Clostridium pasteurianum.